Consider the following 505-residue polypeptide: 2,3-bisphosphoglycerate-independent phosphoglycerate mutase (505 aa).

Residues D11 and S61 each coordinate Mn(2+). The active-site Phosphoserine intermediate is the S61. Substrate is bound by residues H122, 152 to 153 (RD), R183, R189, 259 to 262 (RTDR), and K332. Residues D399, H403, D440, H441, and H458 each contribute to the Mn(2+) site.

It belongs to the BPG-independent phosphoglycerate mutase family. In terms of assembly, monomer. It depends on Mn(2+) as a cofactor.

The catalysed reaction is (2R)-2-phosphoglycerate = (2R)-3-phosphoglycerate. Its pathway is carbohydrate degradation; glycolysis; pyruvate from D-glyceraldehyde 3-phosphate: step 3/5. Catalyzes the interconversion of 2-phosphoglycerate and 3-phosphoglycerate. The chain is 2,3-bisphosphoglycerate-independent phosphoglycerate mutase from Flavobacterium johnsoniae (strain ATCC 17061 / DSM 2064 / JCM 8514 / BCRC 14874 / CCUG 350202 / NBRC 14942 / NCIMB 11054 / UW101) (Cytophaga johnsonae).